The sequence spans 77 residues: ATP synthase subunit c (77 aa).

2 consecutive transmembrane segments (helical) span residues 13-33 (IATV…GIVA) and 55-75 (FLGI…YFIF).

The protein belongs to the ATPase C chain family. F-type ATPases have 2 components, F(1) - the catalytic core - and F(0) - the membrane proton channel. F(1) has five subunits: alpha(3), beta(3), gamma(1), delta(1), epsilon(1). F(0) has three main subunits: a(1), b(2) and c(10-14). The alpha and beta chains form an alternating ring which encloses part of the gamma chain. F(1) is attached to F(0) by a central stalk formed by the gamma and epsilon chains, while a peripheral stalk is formed by the delta and b chains.

It is found in the cell membrane. Functionally, f(1)F(0) ATP synthase produces ATP from ADP in the presence of a proton or sodium gradient. F-type ATPases consist of two structural domains, F(1) containing the extramembraneous catalytic core and F(0) containing the membrane proton channel, linked together by a central stalk and a peripheral stalk. During catalysis, ATP synthesis in the catalytic domain of F(1) is coupled via a rotary mechanism of the central stalk subunits to proton translocation. In terms of biological role, key component of the F(0) channel; it plays a direct role in translocation across the membrane. A homomeric c-ring of between 10-14 subunits forms the central stalk rotor element with the F(1) delta and epsilon subunits. In Clavibacter michiganensis subsp. michiganensis (strain NCPPB 382), this protein is ATP synthase subunit c.